A 479-amino-acid chain; its full sequence is Altronate oxidoreductase (479 aa).

18–29 (IIQFGEGNFLRA) serves as a coordination point for NAD(+).

The protein belongs to the mannitol dehydrogenase family. UxaB subfamily.

It carries out the reaction D-altronate + NAD(+) = keto-D-tagaturonate + NADH + H(+). It participates in carbohydrate metabolism; pentose and glucuronate interconversion. This Bacteroides thetaiotaomicron (strain ATCC 29148 / DSM 2079 / JCM 5827 / CCUG 10774 / NCTC 10582 / VPI-5482 / E50) protein is Altronate oxidoreductase.